Here is a 247-residue protein sequence, read N- to C-terminus: uncharacterized protein (247 aa).

A run of 6 helical transmembrane segments spans residues 19 to 39 (IFFT…SIMF), 73 to 93 (FFTS…AFFI), 106 to 126 (FLSF…YFII), 155 to 175 (YIQF…CPLF), 196 to 216 (YIYF…ILSQ), and 217 to 237 (FFLF…SCFY).

It belongs to the TatC family.

Its subcellular location is the mitochondrion membrane. This is an uncharacterized protein from Nephroselmis olivacea (Green alga).